A 208-amino-acid chain; its full sequence is Photosystem I reaction center subunit II-1, chloroplastic (208 aa).

The N-terminal 45 residues, 1–45 (MATQAAGIFNSAITTAATSGVKKLHFFSTTHRPKSLSFTKTAIRA), are a transit peptide targeting the chloroplast. Threonine 48 is modified (phosphothreonine). The disordered stretch occupies residues 49–72 (DSSAAAAAAPATKEAPVGFTPPQL). Over residues 50 to 64 (SSAAAAAAPATKEAP) the composition is skewed to low complexity. A ferredoxin and ferredoxin-oxidoreductase binding region spans residues 141–149 (RLRSKYKIT).

It belongs to the PsaD family. As to quaternary structure, interacts with PGRL1A and PGRL1B. Post-translationally, phosphorylated by a threonine specific thylakoid kinase in a light activated and redox-dependent manner.

The protein resides in the plastid. It localises to the chloroplast thylakoid membrane. Functionally, psaD can form complexes with ferredoxin and ferredoxin-oxidoreductase in photosystem I (PS I) reaction center. PSAD may encode the ferredoxin-docking protein. The sequence is that of Photosystem I reaction center subunit II-1, chloroplastic (psaD1) from Arabidopsis thaliana (Mouse-ear cress).